The sequence spans 303 residues: Uricase (303 aa).

Catalysis depends on charge relay system residues lysine 12 and threonine 60. Residues threonine 60, aspartate 61, phenylalanine 162, arginine 179, valine 234, glutamine 235, and asparagine 261 each contribute to the urate site. Histidine 263 acts as the Charge relay system in catalysis. A Microbody targeting signal motif is present at residues 301 to 303; it reads TKL.

The protein belongs to the uricase family.

Its subcellular location is the peroxisome. The enzyme catalyses urate + O2 + H2O = 5-hydroxyisourate + H2O2. The protein operates within purine metabolism; urate degradation; (S)-allantoin from urate: step 1/3. Functionally, catalyzes the oxidation of uric acid to 5-hydroxyisourate, which is further processed to form (S)-allantoin. This chain is Uricase, found in Cyberlindnera jadinii (Torula yeast).